Reading from the N-terminus, the 117-residue chain is Large ribosomal subunit protein uL22 (117 aa).

The protein belongs to the universal ribosomal protein uL22 family. As to quaternary structure, part of the 50S ribosomal subunit.

This protein binds specifically to 23S rRNA; its binding is stimulated by other ribosomal proteins, e.g. L4, L17, and L20. It is important during the early stages of 50S assembly. It makes multiple contacts with different domains of the 23S rRNA in the assembled 50S subunit and ribosome. Functionally, the globular domain of the protein is located near the polypeptide exit tunnel on the outside of the subunit, while an extended beta-hairpin is found that lines the wall of the exit tunnel in the center of the 70S ribosome. This Chlorobium phaeobacteroides (strain BS1) protein is Large ribosomal subunit protein uL22.